The chain runs to 96 residues: Small ribosomal subunit protein bS6 (96 aa).

Belongs to the bacterial ribosomal protein bS6 family.

Binds together with bS18 to 16S ribosomal RNA. The protein is Small ribosomal subunit protein bS6 of Bacillus cereus (strain ATCC 10987 / NRS 248).